The sequence spans 125 residues: Large ribosomal subunit protein bL12 (125 aa).

It belongs to the bacterial ribosomal protein bL12 family. Homodimer. Part of the ribosomal stalk of the 50S ribosomal subunit. Forms a multimeric L10(L12)X complex, where L10 forms an elongated spine to which 2 to 4 L12 dimers bind in a sequential fashion. Binds GTP-bound translation factors.

In terms of biological role, forms part of the ribosomal stalk which helps the ribosome interact with GTP-bound translation factors. Is thus essential for accurate translation. In Rickettsia typhi (strain ATCC VR-144 / Wilmington), this protein is Large ribosomal subunit protein bL12.